The sequence spans 378 residues: Ribosomal RNA large subunit methyltransferase G (378 aa).

The protein belongs to the methyltransferase superfamily. RlmG family.

It localises to the cytoplasm. It carries out the reaction guanosine(1835) in 23S rRNA + S-adenosyl-L-methionine = N(2)-methylguanosine(1835) in 23S rRNA + S-adenosyl-L-homocysteine + H(+). Its function is as follows. Specifically methylates the guanine in position 1835 (m2G1835) of 23S rRNA. In Salmonella arizonae (strain ATCC BAA-731 / CDC346-86 / RSK2980), this protein is Ribosomal RNA large subunit methyltransferase G.